The primary structure comprises 269 residues: Protein OPG079 (269 aa).

Belongs to the orthopoxvirus OPG079 family. Homoomultimer (Potential). Interacts with the small subunit of ribonucleotide reductase.

It is found in the host cytoplasm. Functionally, plays an essential role in viral DNA replication. Binds to ssDNA with high affinity and localizes to cytoplasmic factories where nascent viral genomes accumulate. May disrupt loops, hairpins and other secondary structures present on ssDNA to reduce and eliminate pausing of viral DNA polymerase at specific sites during elongation. The sequence is that of Protein OPG079 (OPG079) from Cynomys gunnisoni (Gunnison's prairie dog).